The following is a 1003-amino-acid chain: DNA topoisomerase 3-alpha (1003 aa).

The 145-residue stretch at K35–S179 folds into the Toprim domain. Positions D197–F617 constitute a Topo IA-type catalytic domain. The active-site O-(5'-phospho-DNA)-tyrosine intermediate is Y362. The tract at residues G400–L426 is disordered. Residues C658 to C685 form a C4-type zinc finger. The Zn(2+) site is built by C815, C817, C840, and C845. The GRF-type 1 zinc finger occupies C815 to S854. Residues S856–S888 are disordered. Residues P862–S888 are compositionally biased toward low complexity. Zn(2+) is bound by residues C899, C901, C924, and C932. Residues C899 to N941 form a GRF-type 2 zinc finger. Residues S946 to Q991 are disordered.

Belongs to the type IA topoisomerase family. Binds ssDNA. Interacts (via N-terminal region) with BLM; the interaction is direct. Directly interacts with RMI1. Component of the RMI complex, containing at least TOP3A, RMI1 and RMI2. The RMI complex interacts with BLM. Requires Mg(2+) as cofactor. In terms of tissue distribution, highly expressed in testis.

The protein localises to the mitochondrion matrix. It carries out the reaction ATP-independent breakage of single-stranded DNA, followed by passage and rejoining.. Functionally, releases the supercoiling and torsional tension of DNA introduced during the DNA replication and transcription by transiently cleaving and rejoining one strand of the DNA duplex. Introduces a single-strand break via transesterification at a target site in duplex DNA. The scissile phosphodiester is attacked by the catalytic tyrosine of the enzyme, resulting in the formation of a DNA-(5'-phosphotyrosyl)-enzyme intermediate and the expulsion of a 3'-OH DNA strand. The free DNA strand then undergoes passage around the unbroken strand thus removing DNA supercoils. Finally, in the religation step, the DNA 3'-OH attacks the covalent intermediate to expel the active-site tyrosine and restore the DNA phosphodiester backbone. As an essential component of the RMI complex it is involved in chromosome separation and the processing of homologous recombination intermediates to limit DNA crossover formation in cells. Has DNA decatenation activity. It is required for mtDNA decatenation and segregation after completion of replication, in a process that does not require BLM, RMI1 and RMI2. This chain is DNA topoisomerase 3-alpha (Top3a), found in Mus musculus (Mouse).